The chain runs to 158 residues: Small ribosomal subunit protein uS7c (158 aa).

It belongs to the universal ribosomal protein uS7 family. Part of the 30S ribosomal subunit.

It localises to the plastid. Its subcellular location is the chloroplast. One of the primary rRNA binding proteins, it binds directly to 16S rRNA where it nucleates assembly of the head domain of the 30S subunit. The chain is Small ribosomal subunit protein uS7c (rps7) from Trieres chinensis (Marine centric diatom).